A 468-amino-acid chain; its full sequence is Cysteine--tRNA ligase (468 aa).

A Zn(2+)-binding site is contributed by C33. Residues 35-45 carry the 'HIGH' region motif; sequence ATVQGLPHIGH. Zn(2+) contacts are provided by C211, H236, and E240. Residues 267 to 271 carry the 'KMSKS' region motif; sequence KMSKS. Residue K270 coordinates ATP.

Belongs to the class-I aminoacyl-tRNA synthetase family. In terms of assembly, monomer. Requires Zn(2+) as cofactor.

It localises to the cytoplasm. It carries out the reaction tRNA(Cys) + L-cysteine + ATP = L-cysteinyl-tRNA(Cys) + AMP + diphosphate. This is Cysteine--tRNA ligase from Mycobacterium ulcerans (strain Agy99).